A 281-amino-acid polypeptide reads, in one-letter code: Pantothenate synthetase (281 aa).

M30–H37 contacts ATP. The active-site Proton donor is the H37. Q61 contributes to the (R)-pantoate binding site. Q61 contacts beta-alanine. G147 to D150 provides a ligand contact to ATP. A (R)-pantoate-binding site is contributed by Q153. Residues I176 and K184–R187 contribute to the ATP site.

Belongs to the pantothenate synthetase family. Homodimer.

It localises to the cytoplasm. The catalysed reaction is (R)-pantoate + beta-alanine + ATP = (R)-pantothenate + AMP + diphosphate + H(+). Its pathway is cofactor biosynthesis; (R)-pantothenate biosynthesis; (R)-pantothenate from (R)-pantoate and beta-alanine: step 1/1. Functionally, catalyzes the condensation of pantoate with beta-alanine in an ATP-dependent reaction via a pantoyl-adenylate intermediate. The chain is Pantothenate synthetase from Clostridium botulinum (strain Langeland / NCTC 10281 / Type F).